The sequence spans 147 residues: Nucleoside diphosphate kinase (147 aa).

Residues Lys9, Phe57, Arg85, Thr91, Arg102, and Asn112 each contribute to the ATP site. The Pros-phosphohistidine intermediate role is filled by His115.

Belongs to the NDK family. Homotetramer. It depends on Mg(2+) as a cofactor.

The protein localises to the cytoplasm. It catalyses the reaction a 2'-deoxyribonucleoside 5'-diphosphate + ATP = a 2'-deoxyribonucleoside 5'-triphosphate + ADP. The enzyme catalyses a ribonucleoside 5'-diphosphate + ATP = a ribonucleoside 5'-triphosphate + ADP. Major role in the synthesis of nucleoside triphosphates other than ATP. The ATP gamma phosphate is transferred to the NDP beta phosphate via a ping-pong mechanism, using a phosphorylated active-site intermediate. The protein is Nucleoside diphosphate kinase of Listeria welshimeri serovar 6b (strain ATCC 35897 / DSM 20650 / CCUG 15529 / CIP 8149 / NCTC 11857 / SLCC 5334 / V8).